A 289-amino-acid polypeptide reads, in one-letter code: DegV domain-containing protein YteA (289 aa).

One can recognise a DegV domain in the interval 3 to 284 (FQIMTDSTAD…DGTIAIFSIS (282 aa)). Residues Thr62 and Ser94 each contribute to the hexadecanoate site.

Functionally, may bind long-chain fatty acids, such as palmitate, and may play a role in lipid transport or fatty acid metabolism. The chain is DegV domain-containing protein YteA (yteA) from Lactococcus lactis subsp. lactis (strain IL1403) (Streptococcus lactis).